The following is a 431-amino-acid chain: Trigger factor (431 aa).

In terms of domain architecture, PPIase FKBP-type spans 158-243 (GYLVALETWS…VIEVSEPVLL (86 aa)).

This sequence belongs to the FKBP-type PPIase family. Tig subfamily.

It localises to the cytoplasm. The catalysed reaction is [protein]-peptidylproline (omega=180) = [protein]-peptidylproline (omega=0). Involved in protein export. Acts as a chaperone by maintaining the newly synthesized protein in an open conformation. Functions as a peptidyl-prolyl cis-trans isomerase. This is Trigger factor from Xylella fastidiosa (strain M23).